We begin with the raw amino-acid sequence, 297 residues long: Cyclin-dependent kinase 1 (297 aa).

The Protein kinase domain maps to 4–293 (YQKVEKIGEG…AKRALQQNYL (290 aa)). Residues 10–18 (IGEGTYGVV) and K33 each bind ATP. Residue T14 is modified to Phosphothreonine. A Phosphotyrosine modification is found at Y15. Catalysis depends on D134, which acts as the Proton acceptor. T167 bears the Phosphothreonine mark.

Belongs to the protein kinase superfamily. CMGC Ser/Thr protein kinase family. CDC2/CDKX subfamily. Forms a stable but non-covalent complex with regulatory subunit suc1 and with a cyclin. Interacts with cyclin cdc13. Interacts with cyclin cig2. Interacts with cdc37.

Its subcellular location is the cytoplasm. It catalyses the reaction L-seryl-[protein] + ATP = O-phospho-L-seryl-[protein] + ADP + H(+). The catalysed reaction is L-threonyl-[protein] + ATP = O-phospho-L-threonyl-[protein] + ADP + H(+). Phosphorylation at Thr-14 or Tyr-15 inactivates the enzyme, while phosphorylation at Thr-167 activates it. In terms of biological role, cyclin-dependent kinase that acts as a master regulator of the mitotic and meiotic cell cycles. Required to drive the G1-S and G2-M transitions, and initiation of premeiotic DNA replication and meiosis II. More than 200 substrates have been identified. Substrate specificity is in part regulated by the bound cyclin protein. When complexed with cyclin cig2, it drives the G1-S phase transition. When complexed with cyclin cdc13, it drives the G2-M transition and initiation of meiosis II. Its activity rises throughout the cell cycle and substrate specificity is further influenced by activity thresholds with more sensitive substrates phosphorylated earlier in the cell cycle than less sensitive substrates. Phosphorylates dis1 during metaphase to ensure proper microtubule dynamics and accurate chromosome segregation. Phosphorylates the repetitive C-terminus of the large subunit of RNA polymerase II rpb1. Inactivated by checkpoint signaling following detection of cellular damage, leading to cell cycle arrest to allow damage repair. Inactivated during G2 DNA damage checkpoint signaling. Inactivated in response to defective RNA splicing. In Schizosaccharomyces pombe (strain 972 / ATCC 24843) (Fission yeast), this protein is Cyclin-dependent kinase 1.